Reading from the N-terminus, the 453-residue chain is Bifunctional protein GlmU (453 aa).

Residues 1 to 226 (MSFSAVILAA…PIEVEGVNNR (226 aa)) are pyrophosphorylase. UDP-N-acetyl-alpha-D-glucosamine-binding positions include 8–11 (LAAG), K22, Q73, 78–79 (GT), 100–102 (YGD), G137, E151, N166, and N224. Residue D102 participates in Mg(2+) binding. N224 contributes to the Mg(2+) binding site. Residues 227–247 (IQLARLERAYQAMQAERLLEQ) are linker. Residues 248–453 (GVMLRDPSRF…KGWKRPVKQK (206 aa)) are N-acetyltransferase. UDP-N-acetyl-alpha-D-glucosamine-binding residues include R330 and K348. H360 (proton acceptor) is an active-site residue. 2 residues coordinate UDP-N-acetyl-alpha-D-glucosamine: Y363 and N374. Acetyl-CoA-binding positions include A377, 383-384 (NY), S402, A420, and R437.

It in the N-terminal section; belongs to the N-acetylglucosamine-1-phosphate uridyltransferase family. The protein in the C-terminal section; belongs to the transferase hexapeptide repeat family. Homotrimer. Mg(2+) is required as a cofactor.

The protein localises to the cytoplasm. It catalyses the reaction alpha-D-glucosamine 1-phosphate + acetyl-CoA = N-acetyl-alpha-D-glucosamine 1-phosphate + CoA + H(+). The catalysed reaction is N-acetyl-alpha-D-glucosamine 1-phosphate + UTP + H(+) = UDP-N-acetyl-alpha-D-glucosamine + diphosphate. It participates in nucleotide-sugar biosynthesis; UDP-N-acetyl-alpha-D-glucosamine biosynthesis; N-acetyl-alpha-D-glucosamine 1-phosphate from alpha-D-glucosamine 6-phosphate (route II): step 2/2. It functions in the pathway nucleotide-sugar biosynthesis; UDP-N-acetyl-alpha-D-glucosamine biosynthesis; UDP-N-acetyl-alpha-D-glucosamine from N-acetyl-alpha-D-glucosamine 1-phosphate: step 1/1. The protein operates within bacterial outer membrane biogenesis; LPS lipid A biosynthesis. In terms of biological role, catalyzes the last two sequential reactions in the de novo biosynthetic pathway for UDP-N-acetylglucosamine (UDP-GlcNAc). The C-terminal domain catalyzes the transfer of acetyl group from acetyl coenzyme A to glucosamine-1-phosphate (GlcN-1-P) to produce N-acetylglucosamine-1-phosphate (GlcNAc-1-P), which is converted into UDP-GlcNAc by the transfer of uridine 5-monophosphate (from uridine 5-triphosphate), a reaction catalyzed by the N-terminal domain. This chain is Bifunctional protein GlmU, found in Photobacterium profundum (strain SS9).